A 161-amino-acid chain; its full sequence is Putative esterase C31F10.02 (161 aa).

This sequence belongs to the thioesterase PaaI family.

The polypeptide is Putative esterase C31F10.02 (Schizosaccharomyces pombe (strain 972 / ATCC 24843) (Fission yeast)).